Here is a 195-residue protein sequence, read N- to C-terminus: Peptidyl-tRNA hydrolase (195 aa).

Residue Tyr17 participates in tRNA binding. His22 functions as the Proton acceptor in the catalytic mechanism. Residues Phe68, Asn70, and Asn116 each contribute to the tRNA site.

It belongs to the PTH family. Monomer.

Its subcellular location is the cytoplasm. The catalysed reaction is an N-acyl-L-alpha-aminoacyl-tRNA + H2O = an N-acyl-L-amino acid + a tRNA + H(+). Hydrolyzes ribosome-free peptidyl-tRNAs (with 1 or more amino acids incorporated), which drop off the ribosome during protein synthesis, or as a result of ribosome stalling. Its function is as follows. Catalyzes the release of premature peptidyl moieties from peptidyl-tRNA molecules trapped in stalled 50S ribosomal subunits, and thus maintains levels of free tRNAs and 50S ribosomes. The sequence is that of Peptidyl-tRNA hydrolase from Shewanella loihica (strain ATCC BAA-1088 / PV-4).